A 193-amino-acid chain; its full sequence is Leucyl/phenylalanyl-tRNA--protein transferase (193 aa).

It belongs to the L/F-transferase family.

The protein localises to the cytoplasm. The catalysed reaction is N-terminal L-lysyl-[protein] + L-leucyl-tRNA(Leu) = N-terminal L-leucyl-L-lysyl-[protein] + tRNA(Leu) + H(+). The enzyme catalyses N-terminal L-arginyl-[protein] + L-leucyl-tRNA(Leu) = N-terminal L-leucyl-L-arginyl-[protein] + tRNA(Leu) + H(+). It carries out the reaction L-phenylalanyl-tRNA(Phe) + an N-terminal L-alpha-aminoacyl-[protein] = an N-terminal L-phenylalanyl-L-alpha-aminoacyl-[protein] + tRNA(Phe). Its function is as follows. Functions in the N-end rule pathway of protein degradation where it conjugates Leu, Phe and, less efficiently, Met from aminoacyl-tRNAs to the N-termini of proteins containing an N-terminal arginine or lysine. The protein is Leucyl/phenylalanyl-tRNA--protein transferase of Gloeobacter violaceus (strain ATCC 29082 / PCC 7421).